The following is a 1418-amino-acid chain: ABC transporter G family member 38 (1418 aa).

The interval 1–27 (MAHYRVSSEVENIMNRDRSHRKNEEED) is disordered. Residues 147-419 (TKIRVLPDRK…FEFMGFKCPE (273 aa)) enclose the ABC transporter 1 domain. 179-186 (GPPGSGKS) provides a ligand contact to ATP. In terms of domain architecture, ABC transmembrane type-2 1 spans 497–710 (ELLKACLERE…IQTAVSVNEF (214 aa)). 6 consecutive transmembrane segments (helical) span residues 516–536 (TFVL…VVFW), 548–568 (GIIY…SGFF), 600–620 (IITF…TYFT), 634–654 (YLVL…IAAV), 659–679 (VVSN…SGYV), and 729–749 (FFVE…STIL). The region spanning 821 to 1073 (MTFENITYSV…QLIEYFEGIR (253 aa)) is the ABC transporter 2 domain. An ATP-binding site is contributed by 866–873 (GVSGAGKT). Positions 1146 to 1360 (SQFQACLWKQ…GLYGLTIAQY (215 aa)) constitute an ABC transmembrane type-2 2 domain. Transmembrane regions (helical) follow at residues 1167–1187 (AVRF…FWSL), 1197–1217 (IFNS…QSAA), 1249–1269 (VIIE…IVYG), 1284–1304 (IFFT…VISV), 1310–1330 (IASI…GFTI), 1341–1361 (WFTY…AQYG), and 1387–1407 (FLWV…FIYA).

Belongs to the ABC transporter superfamily. ABCG family. PDR (TC 3.A.1.205) subfamily. Expressed in roots and siliques at low levels.

The protein localises to the membrane. May be a general defense protein. The sequence is that of ABC transporter G family member 38 (ABCG38) from Arabidopsis thaliana (Mouse-ear cress).